The primary structure comprises 190 residues: MATTTATTPPSLTDIRALKYTSSTVSVASPAEIEAITKTWAETFKIPNDVLPLACWDLARAFADVGASSKSELTGDSAALAGVSRKQLAQAIKIHCTIRQFCMYFANIVWNIMLDTKTPPASWSKLGYKEESKFAGFDFFDGVNHPAALMPADGLIRGPSDAEILAHQTAKQVALHRDAKPTWHKRCQLC.

This sequence belongs to the potexvirus capsid protein family.

Its subcellular location is the virion. In terms of biological role, required for genome encapsidation. Forms ribonucleoprotein complexes along with TGB1 helicase and viral RNA. The polypeptide is Coat protein (White clover mosaic virus (strain M) (WCMV)).